Consider the following 176-residue polypeptide: Small ribosomal subunit protein uS4 (176 aa).

The region spanning R103–L165 is the S4 RNA-binding domain.

The protein belongs to the universal ribosomal protein uS4 family. Part of the 30S ribosomal subunit. Contacts protein S5. The interaction surface between S4 and S5 is involved in control of translational fidelity.

In terms of biological role, one of the primary rRNA binding proteins, it binds directly to 16S rRNA where it nucleates assembly of the body of the 30S subunit. With S5 and S12 plays an important role in translational accuracy. The protein is Small ribosomal subunit protein uS4 of Hyperthermus butylicus (strain DSM 5456 / JCM 9403 / PLM1-5).